We begin with the raw amino-acid sequence, 365 residues long: Beta-parvin (365 aa).

Positions 1–12 are enriched in pro residues; the sequence is MSSAPPRSPTPR. The segment at 1-52 is disordered; it reads MSSAPPRSPTPRAPKMKKDESFLGKLGGTLARKKKTREVTDLQEEGKSAINS. Phosphoserine is present on Ser8. The segment covering 37-47 has biased composition (basic and acidic residues); it reads REVTDLQEEGK. Calponin-homology (CH) domains are found at residues 88–195 and 255–362; these read KELV…MHFR and NLVK…TKYK.

The protein belongs to the parvin family. In terms of assembly, interacts with ILK, ARHGEF6, PXN (via LD motifs), ACTN2 and actin. Interacts with DYSF. Phosphorylated by ILK. Expressed predominantly in heart and moderately in spleen, lung and skeletal muscle.

It localises to the cell junction. Its subcellular location is the focal adhesion. It is found in the cell membrane. The protein localises to the cytoplasm. The protein resides in the cytoskeleton. It localises to the cell projection. Its subcellular location is the lamellipodium. It is found in the myofibril. The protein localises to the sarcomere. The protein resides in the z line. In terms of biological role, adapter protein that plays a role in integrin signaling via ILK and in activation of the GTPases CDC42 and RAC1 by guanine exchange factors, such as ARHGEF6. Is involved in the reorganization of the actin cytoskeleton and formation of lamellipodia. Plays a role in cell adhesion, cell spreading, establishment or maintenance of cell polarity, and cell migration. The sequence is that of Beta-parvin (Parvb) from Mus musculus (Mouse).